Consider the following 830-residue polypeptide: DNA gyrase subunit A (830 aa).

Positions 33-497 constitute a Topo IIA-type catalytic domain; it reads LPDVRDGLKP…AENDIDIEDL (465 aa). Y121 acts as the O-(5'-phospho-DNA)-tyrosine intermediate in catalysis. The GyrA-box signature appears at 524 to 530; the sequence is QKRGGRG. A disordered region spans residues 805 to 830; the sequence is KDDSEQLEDSEEVSEVHDAEENNSEE.

The protein belongs to the type II topoisomerase GyrA/ParC subunit family. Heterotetramer, composed of two GyrA and two GyrB chains. In the heterotetramer, GyrA contains the active site tyrosine that forms a transient covalent intermediate with DNA, while GyrB binds cofactors and catalyzes ATP hydrolysis.

The protein localises to the cytoplasm. The catalysed reaction is ATP-dependent breakage, passage and rejoining of double-stranded DNA.. In terms of biological role, a type II topoisomerase that negatively supercoils closed circular double-stranded (ds) DNA in an ATP-dependent manner to modulate DNA topology and maintain chromosomes in an underwound state. Negative supercoiling favors strand separation, and DNA replication, transcription, recombination and repair, all of which involve strand separation. Also able to catalyze the interconversion of other topological isomers of dsDNA rings, including catenanes and knotted rings. Type II topoisomerases break and join 2 DNA strands simultaneously in an ATP-dependent manner. In Clostridium acetobutylicum (strain ATCC 824 / DSM 792 / JCM 1419 / IAM 19013 / LMG 5710 / NBRC 13948 / NRRL B-527 / VKM B-1787 / 2291 / W), this protein is DNA gyrase subunit A.